Here is a 251-residue protein sequence, read N- to C-terminus: Chorismate mutase (251 aa).

The Chorismate mutase domain occupies 1-251; that stretch reads MSLVNEKLKL…EVDYLLARLL (251 aa). Residues R74, R75, N134, G136, and S137 each coordinate L-tyrosine. 3 residues coordinate L-tryptophan: N134, G136, and S137.

Homodimer.

The protein resides in the cytoplasm. The catalysed reaction is chorismate = prephenate. Its pathway is metabolic intermediate biosynthesis; prephenate biosynthesis; prephenate from chorismate: step 1/1. With respect to regulation, each dimer has two allosteric binding sites that can bind the regulatory effectors tryptophan or tyrosine. Can bind either one tryptophan or one tyrosine, two tryptophan or two tyrosine or one tryptophan and one tyrosine, which differentially affect the catalytic activity. Activated by tryptophan and subject to feedback inhibition by tyrosine. In the presence of both tryptophan and tyrosine, the enzyme is in the activated state. Catalyzes the Claisen rearrangement of chorismate to prephenate. Acts at the first branch point in the aromatic amino acid pathway where it steers biosynthesis towards phenylalanine and tyrosine, and away from tryptophan. The protein is Chorismate mutase of Schizosaccharomyces pombe (strain 972 / ATCC 24843) (Fission yeast).